A 628-amino-acid polypeptide reads, in one-letter code: Protein ETHYLENE INSENSITIVE 3 (628 aa).

A coiled-coil region spans residues 38–68 (EDDYTDDEIDVDELERRMWRDKMRLKRLKEQ). Basic and acidic residues predominate over residues 66–79 (KEQDKGKEGVDAAK). A disordered region spans residues 66–92 (KEQDKGKEGVDAAKQRQSQEQARRKKM). A DNA-binding domain region spans residues 174-306 (TPHTLQELQD…SLARELYPES (133 aa)).

Belongs to the EIN3 family. Acts as a homodimer to bind the primary ethylene response element. Interacts with TAF12B. Interacts with KIN10. Binds to ENAP1 in the presence of ethylene; this reaction facilitates its association with histone. Post-translationally, phosphorylated by KIN10.

The protein localises to the nucleus. With respect to regulation, activated by phosphorylation by MPK3 and MPK6. Down-regulated by KIN10 that controls its protein stability under a phosphorylation-dependent manner. Satnilitzed during hypoxia (e.g. submergences) via a ceramides-triggered and CTR1-dependent manner. Its function is as follows. Transcription factor acting as a positive regulator in the ethylene response pathway, by promoting histone acetylation in an ENAP1-dependent manner, thus accelerating the expression of ethylene-responsive genes. Binds DNA. Is required for ethylene responsiveness in adult plant tissues. Binds a primary ethylene response element present in the ETHYLENE-RESPONSE-FACTOR1 promoter with consequence to activate the transcription of this gene. The sequence is that of Protein ETHYLENE INSENSITIVE 3 from Arabidopsis thaliana (Mouse-ear cress).